Reading from the N-terminus, the 883-residue chain is Phosphoenolpyruvate carboxylase (883 aa).

Residues histidine 138 and lysine 546 contribute to the active site.

This sequence belongs to the PEPCase type 1 family. The cofactor is Mg(2+).

It catalyses the reaction oxaloacetate + phosphate = phosphoenolpyruvate + hydrogencarbonate. Its function is as follows. Forms oxaloacetate, a four-carbon dicarboxylic acid source for the tricarboxylic acid cycle. This is Phosphoenolpyruvate carboxylase from Salmonella schwarzengrund (strain CVM19633).